We begin with the raw amino-acid sequence, 807 residues long: Glycerol-3-phosphate acyltransferase (807 aa).

Positions 305–310 match the HXXXXD motif motif; it reads CHRSHM.

Belongs to the GPAT/DAPAT family.

The protein localises to the cell inner membrane. It catalyses the reaction sn-glycerol 3-phosphate + an acyl-CoA = a 1-acyl-sn-glycero-3-phosphate + CoA. Its pathway is phospholipid metabolism; CDP-diacylglycerol biosynthesis; CDP-diacylglycerol from sn-glycerol 3-phosphate: step 1/3. The chain is Glycerol-3-phosphate acyltransferase from Aliivibrio salmonicida (strain LFI1238) (Vibrio salmonicida (strain LFI1238)).